The primary structure comprises 1290 residues: 1-phosphatidylinositol 4,5-bisphosphate phosphodiesterase gamma-1 (1290 aa).

Ala-2 is subject to N-acetylalanine. The PH 1 domain maps to 27-142 (RSLEVGTVMT…WIKGLTWLME (116 aa)). In terms of domain architecture, EF-hand spans 152–187 (QIERWLRKQFYSVDRNREDRISAKDLKNMLSQVNYR). The Ca(2+) site is built by Asp-165, Asn-167, Glu-169, Arg-171, and Asp-176. In terms of domain architecture, PI-PLC X-box spans 320–464 (ETMNNPLSHY…LKRKILIKHK (145 aa)). Catalysis depends on residues His-335 and His-380. The PH 2; first part domain occupies 489–523 (SIKNGILYLEDPVNHEWYPHYFVLTSSKIYYSEET). Tyr-506 is subject to Phosphotyrosine. Residues 522-546 (ETSSDQGNEDEEEPKEASGSTELHS) form a disordered region. SH2 domains lie at 550 to 657 (WFHG…SEPV) and 668 to 756 (WYHA…RYPI). Tyr-771 carries the phosphotyrosine; by SYK modification. Position 775 is a phosphotyrosine (Tyr-775). At Tyr-783 the chain carries Phosphotyrosine; by ITK, SYK and TXK. The 61-residue stretch at 791–851 (TFKCAVKALF…PSNYVEEMIN (61 aa)) folds into the SH3 domain. Positions 895–931 (FVFSISMPSVAQWSLDVAADSQEELQDWVKKIREVAQ) constitute a PH 2; second part domain. The region spanning 953-1070 (LSELVVYCRP…GYVLQPSTMR (118 aa)) is the PI-PLC Y-box domain. A Phosphotyrosine modification is found at Tyr-977. One can recognise a C2 domain in the interval 1071 to 1194 (DEAFDPFDKS…TGYRAVPLKN (124 aa)). A phosphoserine mark is found at Ser-1221, Ser-1227, Ser-1233, and Ser-1248. At Tyr-1253 the chain carries Phosphotyrosine. Residue Ser-1263 is modified to Phosphoserine. The tract at residues 1271-1290 (FDSRERRAPRRTRVNGDNRL) is disordered.

In terms of assembly, interacts with AGAP2 via its SH3 domain. Interacts (via SH2 domain) with RET. Interacts with FLT1 (tyrosine-phosphorylated). Interacts (via SH2 domain) with FGFR1, FGFR2, FGFR3 and FGFR4 (phosphorylated). Interacts with LAT (phosphorylated) upon TCR activation. Interacts (via SH3 domain) with the Pro-rich domain of TNK1. Associates with BLNK, VAV1, GRB2 and NCK1 in a B-cell antigen receptor-dependent fashion. Interacts with CBLB in activated T-cells; which inhibits phosphorylation. Interacts with SHB. Interacts (via SH3 domain) with the Arg/Gly-rich-flanked Pro-rich domains of KHDRBS1/SAM68. This interaction is selectively regulated by arginine methylation of KHDRBS1/SAM68. Interacts with INPP5D/SHIP1, THEMIS and CLNK. Interacts with AXL, FLT4 and KIT. Interacts with RALGPS1. Interacts (via the SH2 domains) with VIL1 (phosphorylated at C-terminus tyrosine phosphorylation sites). Interacts (via SH2 domain) with PDGFRA and PDGFRB (tyrosine phosphorylated). Interacts with PIP5K1C. Interacts with NTRK1 and NTRK2 (phosphorylated upon ligand-binding). Interacts with SYK; activates PLCG1. Interacts with GRB2, LAT and THEMIS upon TCR activation in thymocytes. Interacts with TESPA1; the association is increased with prolonged stimulation of the TCR and may facilitate the assembly of the LAT signalosome. Interacts (via C-terminal proline-rich domain (PRD)) with PLCG1 (via SH3 domain); this interaction leads to guanine nucleotide exchange from PlCG1 to DNM1 and enhances DNM1-dependent endocytosis. Ca(2+) is required as a cofactor. In terms of processing, ubiquitinated by CBLB in activated T-cells. Tyrosine phosphorylated in response to signaling via activated FLT3, KIT and PDGFRA. Tyrosine phosphorylated by activated FGFR1, FGFR2, FGFR3 and FGFR4. Tyrosine phosphorylated by activated FLT1 and KDR. Tyrosine phosphorylated by activated PDGFRB. The receptor-mediated activation of PLCG1 involves its phosphorylation by tyrosine kinases, in response to ligation of a variety of growth factor receptors and immune system receptors. For instance, SYK phosphorylates and activates PLCG1 in response to ligation of the B-cell receptor. May be dephosphorylated by PTPRJ. Phosphorylated by ITK and TXK on Tyr-783 upon TCR activation in T-cells.

The protein resides in the cell projection. Its subcellular location is the lamellipodium. It is found in the ruffle. It catalyses the reaction a 1,2-diacyl-sn-glycero-3-phospho-(1D-myo-inositol-4,5-bisphosphate) + H2O = 1D-myo-inositol 1,4,5-trisphosphate + a 1,2-diacyl-sn-glycerol + H(+). It carries out the reaction a 1,2-diacyl-sn-glycero-3-phospho-(1D-myo-inositol) + H2O = 1D-myo-inositol 1-phosphate + a 1,2-diacyl-sn-glycerol + H(+). With respect to regulation, activated by phosphorylation on tyrosine residues. Its function is as follows. Mediates the production of the second messenger molecules diacylglycerol (DAG) and inositol 1,4,5-trisphosphate (IP3). Plays an important role in the regulation of intracellular signaling cascades. Becomes activated in response to ligand-mediated activation of receptor-type tyrosine kinases, such as PDGFRA, PDGFRB, EGFR, FGFR1, FGFR2, FGFR3 and FGFR4. Plays a role in actin reorganization and cell migration. Guanine nucleotide exchange factor that binds the GTPase DNM1 and catalyzes the dissociation of GDP, allowing a GTP molecule to bind in its place, therefore enhancing DNM1-dependent endocytosis. This Rattus norvegicus (Rat) protein is 1-phosphatidylinositol 4,5-bisphosphate phosphodiesterase gamma-1.